Reading from the N-terminus, the 160-residue chain is Putative 4-hydroxy-4-methyl-2-oxoglutarate aldolase (160 aa).

Substrate-binding positions include 75-78 (GDQL) and Arg97. Residue Asp98 coordinates a divalent metal cation.

It belongs to the class II aldolase/RraA-like family. As to quaternary structure, homotrimer. A divalent metal cation is required as a cofactor.

It carries out the reaction 4-hydroxy-4-methyl-2-oxoglutarate = 2 pyruvate. It catalyses the reaction oxaloacetate + H(+) = pyruvate + CO2. Catalyzes the aldol cleavage of 4-hydroxy-4-methyl-2-oxoglutarate (HMG) into 2 molecules of pyruvate. Also contains a secondary oxaloacetate (OAA) decarboxylase activity due to the common pyruvate enolate transition state formed following C-C bond cleavage in the retro-aldol and decarboxylation reactions. The sequence is that of Putative 4-hydroxy-4-methyl-2-oxoglutarate aldolase from Vibrio vulnificus (strain YJ016).